Reading from the N-terminus, the 551-residue chain is Formate--tetrahydrofolate ligase (551 aa).

ATP is bound at residue 65–72 (TPAGEGKT).

It belongs to the formate--tetrahydrofolate ligase family.

The enzyme catalyses (6S)-5,6,7,8-tetrahydrofolate + formate + ATP = (6R)-10-formyltetrahydrofolate + ADP + phosphate. The protein operates within one-carbon metabolism; tetrahydrofolate interconversion. The chain is Formate--tetrahydrofolate ligase from Thermosipho africanus (strain TCF52B).